Consider the following 101-residue polypeptide: Small ribosomal subunit protein uS14 (101 aa).

The protein belongs to the universal ribosomal protein uS14 family. As to quaternary structure, part of the 30S ribosomal subunit. Contacts proteins S3 and S10.

Binds 16S rRNA, required for the assembly of 30S particles and may also be responsible for determining the conformation of the 16S rRNA at the A site. In Proteus mirabilis (strain HI4320), this protein is Small ribosomal subunit protein uS14.